The following is a 348-amino-acid chain: Protein RecA (348 aa).

66-73 contributes to the ATP binding site; that stretch reads GPESSGKT.

It belongs to the RecA family.

It localises to the cytoplasm. Functionally, can catalyze the hydrolysis of ATP in the presence of single-stranded DNA, the ATP-dependent uptake of single-stranded DNA by duplex DNA, and the ATP-dependent hybridization of homologous single-stranded DNAs. It interacts with LexA causing its activation and leading to its autocatalytic cleavage. The polypeptide is Protein RecA (Legionella pneumophila (strain Paris)).